A 119-amino-acid polypeptide reads, in one-letter code: Beta-2-microglobulin (119 aa).

The signal sequence occupies residues 1 to 20 (MARFVAVALLVLLSLSGLEA). The region spanning 25-114 (PKIQVYSRHP…VTFSTPKTVK (90 aa)) is the Ig-like C1-type domain. A disulfide bridge connects residues C45 and C100.

It belongs to the beta-2-microglobulin family. As to quaternary structure, heterodimer of an alpha chain and a beta chain. Beta-2-microglobulin is the beta-chain of major histocompatibility complex class I molecules.

The protein resides in the secreted. Component of the class I major histocompatibility complex (MHC). Involved in the presentation of peptide antigens to the immune system. This Plecturocebus moloch (Dusky titi monkey) protein is Beta-2-microglobulin (B2M).